We begin with the raw amino-acid sequence, 408 residues long: Phosphoglycerate kinase (408 aa).

Substrate-binding positions include Asp-24–Asn-26, Arg-39, His-62–Arg-65, Arg-121, and Arg-161. ATP is bound by residues Lys-211, Gly-307, Glu-338, and Gly-364–Ser-367.

Belongs to the phosphoglycerate kinase family. As to quaternary structure, monomer.

Its subcellular location is the cytoplasm. It carries out the reaction (2R)-3-phosphoglycerate + ATP = (2R)-3-phospho-glyceroyl phosphate + ADP. It participates in carbohydrate degradation; glycolysis; pyruvate from D-glyceraldehyde 3-phosphate: step 2/5. The sequence is that of Phosphoglycerate kinase from Paenarthrobacter aurescens (strain TC1).